A 230-amino-acid polypeptide reads, in one-letter code: 7-cyano-7-deazaguanine synthase (230 aa).

ATP is bound at residue Tyr9–Leu19. Residues Cys190, Cys200, Cys203, and Cys206 each coordinate Zn(2+).

Belongs to the QueC family. Zn(2+) is required as a cofactor.

It carries out the reaction 7-carboxy-7-deazaguanine + NH4(+) + ATP = 7-cyano-7-deazaguanine + ADP + phosphate + H2O + H(+). It participates in purine metabolism; 7-cyano-7-deazaguanine biosynthesis. Functionally, catalyzes the ATP-dependent conversion of 7-carboxy-7-deazaguanine (CDG) to 7-cyano-7-deazaguanine (preQ(0)). The chain is 7-cyano-7-deazaguanine synthase from Syntrophotalea carbinolica (strain DSM 2380 / NBRC 103641 / GraBd1) (Pelobacter carbinolicus).